Consider the following 426-residue polypeptide: tRNA(Met) cytidine acetate ligase (426 aa).

ATP contacts are provided by residues 7 to 20 (VVEYNPFHNGHLFH), glycine 101, asparagine 168, and arginine 193.

It belongs to the TmcAL family.

It is found in the cytoplasm. It catalyses the reaction cytidine(34) in elongator tRNA(Met) + acetate + ATP = N(4)-acetylcytidine(34) in elongator tRNA(Met) + AMP + diphosphate. Catalyzes the formation of N(4)-acetylcytidine (ac(4)C) at the wobble position of elongator tRNA(Met), using acetate and ATP as substrates. First activates an acetate ion to form acetyladenylate (Ac-AMP) and then transfers the acetyl group to tRNA to form ac(4)C34. The polypeptide is tRNA(Met) cytidine acetate ligase (Kosmotoga olearia (strain ATCC BAA-1733 / DSM 21960 / TBF 19.5.1)).